The following is a 111-amino-acid chain: Large ribosomal subunit protein uL22 (111 aa).

The protein belongs to the universal ribosomal protein uL22 family. Part of the 50S ribosomal subunit.

This protein binds specifically to 23S rRNA; its binding is stimulated by other ribosomal proteins, e.g. L4, L17, and L20. It is important during the early stages of 50S assembly. It makes multiple contacts with different domains of the 23S rRNA in the assembled 50S subunit and ribosome. Functionally, the globular domain of the protein is located near the polypeptide exit tunnel on the outside of the subunit, while an extended beta-hairpin is found that lines the wall of the exit tunnel in the center of the 70S ribosome. In Clostridium beijerinckii (strain ATCC 51743 / NCIMB 8052) (Clostridium acetobutylicum), this protein is Large ribosomal subunit protein uL22.